Consider the following 197-residue polypeptide: COMM domain-containing protein 6 (197 aa).

The COMM domain occupies 130–197 (ELVDFQWKIG…KEMSSVLETV (68 aa)).

The protein belongs to the COMM domain-containing protein 6 family. As to quaternary structure, component of the commander complex consisting of the CCC subcomplex and the retriever subcomplex. Component of the CCC subcomplex.

The protein localises to the nucleus. It localises to the cytoplasm. Functionally, scaffold protein in the commander complex that is essential for endosomal recycling of transmembrane cargos; the commander complex is composed of the CCC subcomplex and the retriever subcomplex. May modulate activity of cullin-RING E3 ubiquitin ligase (CRL) complexes. Down-regulates activation of NF-kappa-B. Inhibits TNF-induced NFKB1 activation. This is COMM domain-containing protein 6 (commd6) from Xenopus tropicalis (Western clawed frog).